The following is a 34-amino-acid chain: Tryptophanase operon leader peptide (34 aa).

The sequence is that of Tryptophanase operon leader peptide (tnaL) from Proteus vulgaris.